Here is a 655-residue protein sequence, read N- to C-terminus: tRNA 5-methylaminomethyl-2-thiouridine biosynthesis bifunctional protein MnmC (655 aa).

The tRNA (mnm(5)s(2)U34)-methyltransferase stretch occupies residues Met-1–Ala-236. The segment at Ile-260–Ser-655 is FAD-dependent cmnm(5)s(2)U34 oxidoreductase.

In the N-terminal section; belongs to the methyltransferase superfamily. tRNA (mnm(5)s(2)U34)-methyltransferase family. It in the C-terminal section; belongs to the DAO family. Requires FAD as cofactor.

The protein resides in the cytoplasm. The enzyme catalyses 5-aminomethyl-2-thiouridine(34) in tRNA + S-adenosyl-L-methionine = 5-methylaminomethyl-2-thiouridine(34) in tRNA + S-adenosyl-L-homocysteine + H(+). Functionally, catalyzes the last two steps in the biosynthesis of 5-methylaminomethyl-2-thiouridine (mnm(5)s(2)U) at the wobble position (U34) in tRNA. Catalyzes the FAD-dependent demodification of cmnm(5)s(2)U34 to nm(5)s(2)U34, followed by the transfer of a methyl group from S-adenosyl-L-methionine to nm(5)s(2)U34, to form mnm(5)s(2)U34. This chain is tRNA 5-methylaminomethyl-2-thiouridine biosynthesis bifunctional protein MnmC, found in Paraburkholderia phymatum (strain DSM 17167 / CIP 108236 / LMG 21445 / STM815) (Burkholderia phymatum).